The chain runs to 256 residues: EF-hand calcium-binding domain-containing protein 4A (256 aa).

Residues 1–10 (MAHLGSRRRM) are compositionally biased toward basic residues. The tract at residues 1–32 (MAHLGSRRRMSPGLRTRIAHRKAHRTPPSPLI) is disordered. EF-hand domains are found at residues 41–69 (KAHE…QNEL) and 71–106 (LTPE…LLGV). 5 residues coordinate Ca(2+): Asp-84, Ser-86, Asn-88, Tyr-90, and Glu-95. The stretch at 190–235 (IRDVHHEKDTLEQALKRKETDHGREVRCLYEEMEQQIKIERERLLK) forms a coiled coil.

The protein belongs to the EFCAB4 family.

The polypeptide is EF-hand calcium-binding domain-containing protein 4A (cracr2b) (Xenopus tropicalis (Western clawed frog)).